Consider the following 184-residue polypeptide: Homeobox protein LOX10 (184 aa).

Disordered regions lie at residues 1-29 and 129-184; these read KIVS…PLQH and YKTK…NKPG. The homeobox DNA-binding region spans 76–135; sequence RRKRRILFSQAQIYELERRFRQQKYLSAPEREHLATFIGLTPTQVKIWFQNHRYKTKKSK. Low complexity-rich tracts occupy residues 140–161 and 174–184; these read NSPS…ASTT and SNTTNNNNKPG.

It belongs to the NK-2 homeobox family. In terms of tissue distribution, expressed in a segmental pattern in the endoderm and in the cephalic nervous system.

It localises to the nucleus. In terms of biological role, may play a role in patterning the gut. The polypeptide is Homeobox protein LOX10 (LOX10) (Helobdella triserialis (Leech)).